Consider the following 335-residue polypeptide: Lipoyl synthase (335 aa).

Residues 1 to 13 (MTIDTNPESSTPS) show a composition bias toward polar residues. A disordered region spans residues 1–29 (MTIDTNPESSTPSAPAYNPSEKQKGSAKT). Residues Cys-75, Cys-80, Cys-86, Cys-101, Cys-105, Cys-108, and Ser-315 each contribute to the [4Fe-4S] cluster site. The 219-residue stretch at 86-304 (CFGKGTATFM…EEEAYKMGFA (219 aa)) folds into the Radical SAM core domain.

Belongs to the radical SAM superfamily. Lipoyl synthase family. [4Fe-4S] cluster serves as cofactor.

The protein localises to the cytoplasm. It carries out the reaction [[Fe-S] cluster scaffold protein carrying a second [4Fe-4S](2+) cluster] + N(6)-octanoyl-L-lysyl-[protein] + 2 oxidized [2Fe-2S]-[ferredoxin] + 2 S-adenosyl-L-methionine + 4 H(+) = [[Fe-S] cluster scaffold protein] + N(6)-[(R)-dihydrolipoyl]-L-lysyl-[protein] + 4 Fe(3+) + 2 hydrogen sulfide + 2 5'-deoxyadenosine + 2 L-methionine + 2 reduced [2Fe-2S]-[ferredoxin]. The protein operates within protein modification; protein lipoylation via endogenous pathway; protein N(6)-(lipoyl)lysine from octanoyl-[acyl-carrier-protein]: step 2/2. In terms of biological role, catalyzes the radical-mediated insertion of two sulfur atoms into the C-6 and C-8 positions of the octanoyl moiety bound to the lipoyl domains of lipoate-dependent enzymes, thereby converting the octanoylated domains into lipoylated derivatives. In Herminiimonas arsenicoxydans, this protein is Lipoyl synthase.